Reading from the N-terminus, the 66-residue chain is UPF0337 protein SAG0606 (66 aa).

The span at Met1–Val10 shows a compositional bias: basic and acidic residues. Residues Met1–Lys23 are disordered.

This sequence belongs to the UPF0337 (CsbD) family.

This Streptococcus agalactiae serotype V (strain ATCC BAA-611 / 2603 V/R) protein is UPF0337 protein SAG0606.